The following is a 426-amino-acid chain: Endoglucanase (426 aa).

Residues 1-19 (MRRCMPLVAASVAALMLAG) form the signal peptide. C20 is lipidated: N-palmitoyl cysteine. C20 carries the S-diacylglycerol cysteine lipid modification. Residues 20–45 (CGGGDGDPSLSTASVSATDTTTLKPA) constitute a propeptide that is removed on maturation. The active-site Proton donor is E249. The Nucleophile role is filled by E361.

The protein belongs to the glycosyl hydrolase 5 (cellulase A) family.

It localises to the cell membrane. The catalysed reaction is Endohydrolysis of (1-&gt;4)-beta-D-glucosidic linkages in cellulose, lichenin and cereal beta-D-glucans.. The chain is Endoglucanase (egl) from Ralstonia solanacearum (Pseudomonas solanacearum).